We begin with the raw amino-acid sequence, 684 residues long: Probable phosphoenolpyruvate synthase (684 aa).

Catalysis depends on H424, which acts as the Tele-phosphohistidine intermediate. Substrate is bound by residues R517, R564, and E661. Mg(2+) is bound at residue E661.

It belongs to the PEP-utilizing enzyme family. The cofactor is Mg(2+).

The catalysed reaction is pyruvate + ATP + H2O = phosphoenolpyruvate + AMP + phosphate + 2 H(+). It participates in carbohydrate biosynthesis; gluconeogenesis. Its function is as follows. Catalyzes the phosphorylation of pyruvate to phosphoenolpyruvate. The sequence is that of Probable phosphoenolpyruvate synthase (ppsA) from Methanothermobacter thermautotrophicus (strain ATCC 29096 / DSM 1053 / JCM 10044 / NBRC 100330 / Delta H) (Methanobacterium thermoautotrophicum).